A 337-amino-acid polypeptide reads, in one-letter code: Ferredoxin--NADP reductase (337 aa).

FAD-binding residues include Asp35, Gln43, Tyr48, Val88, Phe123, Asp289, and Thr330.

This sequence belongs to the ferredoxin--NADP reductase type 2 family. As to quaternary structure, homodimer. The cofactor is FAD.

It catalyses the reaction 2 reduced [2Fe-2S]-[ferredoxin] + NADP(+) + H(+) = 2 oxidized [2Fe-2S]-[ferredoxin] + NADPH. The protein is Ferredoxin--NADP reductase of Paramagnetospirillum magneticum (strain ATCC 700264 / AMB-1) (Magnetospirillum magneticum).